Here is a 282-residue protein sequence, read N- to C-terminus: MSLVTSLTYVLPHRLLSSLARALAYSNRPATKQWLIDTVTRKFGVDLSEAQEPDPRAYPTFNAFFTRALKHGARVPDADPAALLMPADGRISQLGPIENGRIFQAKGQSFTAAELLGDAGAAAPFNNGLFATVYLSPKDYHRVHMPWTGTLRTTVHVPGRLFSVGPDAVRNVPRLFARNERLVCHFDTDFGPMASVMVGALLVSGVETVWSGVEIPRYGDRITRKDYRGKGIVLEKFAEMARFNYGSTVIVLLPPGVATLDGGLGAETSVRLGQALARRQLG.

Residues D88, H144, and S247 each act as charge relay system; for autoendoproteolytic cleavage activity in the active site. S247 acts as the Schiff-base intermediate with substrate; via pyruvic acid; for decarboxylase activity in catalysis. S247 is subject to Pyruvic acid (Ser); by autocatalysis.

This sequence belongs to the phosphatidylserine decarboxylase family. PSD-B subfamily. Prokaryotic type I sub-subfamily. As to quaternary structure, heterodimer of a large membrane-associated beta subunit and a small pyruvoyl-containing alpha subunit. It depends on pyruvate as a cofactor. Post-translationally, is synthesized initially as an inactive proenzyme. Formation of the active enzyme involves a self-maturation process in which the active site pyruvoyl group is generated from an internal serine residue via an autocatalytic post-translational modification. Two non-identical subunits are generated from the proenzyme in this reaction, and the pyruvate is formed at the N-terminus of the alpha chain, which is derived from the carboxyl end of the proenzyme. The autoendoproteolytic cleavage occurs by a canonical serine protease mechanism, in which the side chain hydroxyl group of the serine supplies its oxygen atom to form the C-terminus of the beta chain, while the remainder of the serine residue undergoes an oxidative deamination to produce ammonia and the pyruvoyl prosthetic group on the alpha chain. During this reaction, the Ser that is part of the protease active site of the proenzyme becomes the pyruvoyl prosthetic group, which constitutes an essential element of the active site of the mature decarboxylase.

It localises to the cell membrane. The catalysed reaction is a 1,2-diacyl-sn-glycero-3-phospho-L-serine + H(+) = a 1,2-diacyl-sn-glycero-3-phosphoethanolamine + CO2. It functions in the pathway phospholipid metabolism; phosphatidylethanolamine biosynthesis; phosphatidylethanolamine from CDP-diacylglycerol: step 2/2. In terms of biological role, catalyzes the formation of phosphatidylethanolamine (PtdEtn) from phosphatidylserine (PtdSer). In Xanthomonas oryzae pv. oryzae (strain KACC10331 / KXO85), this protein is Phosphatidylserine decarboxylase proenzyme.